The primary structure comprises 317 residues: Prenyl transferase paxC (317 aa).

Positions 53 and 86 each coordinate substrate. Mg(2+) contacts are provided by Asp93 and Asp97. Arg102, Lys186, Thr187, Gln216, Asn223, and Lys233 together coordinate substrate.

The protein belongs to the FPP/GGPP synthase family.

It functions in the pathway secondary metabolite biosynthesis. Prenyl transferase; part of the gene cluster that mediates the biosynthesis of paxalline, a mycotoxin that acts as an inhibitor of mammalian maxi-K channels. PaxG, the geranylgeranyl diphosphate (GGPP) synthase is proposed to catalyze the first step in paxilline biosynthesis. Condensation of indole-3-glycerol phosphate with GGPP by paxC then forms 3-geranylgeranylindole (3-GGI), followed by epoxidation and cyclization of this intermediate (by paxM and paxB) to form paspaline. Paspaline is subsequently converted to 13-desoxypaxilline by paxP, the latter being then converted to paxilline by paxQ. Finally paxilline can be mono- and di-prenylated by paxD. This Penicillium paxilli protein is Prenyl transferase paxC.